The sequence spans 106 residues: Putative double-stranded DNA mimic protein VV1228 (106 aa).

It belongs to the putative dsDNA mimic protein family.

In terms of biological role, may act as a double-stranded DNA (dsDNA) mimic. Probably regulates the activity of a dsDNA-binding protein. The chain is Putative double-stranded DNA mimic protein VV1228 from Vibrio vulnificus (strain YJ016).